Consider the following 128-residue polypeptide: Putative histidinol dehydrogenase (128 aa).

The disordered stretch occupies residues 21–84 (QRPDIAPRHH…EGQEKASGRR (64 aa)). Composition is skewed to basic and acidic residues over residues 34-50 (HRAE…RRTA) and 72-81 (QGREGQEKAS).

The protein belongs to the histidinol dehydrogenase family.

The catalysed reaction is L-histidinol + 2 NAD(+) + H2O = L-histidine + 2 NADH + 3 H(+). It functions in the pathway amino-acid biosynthesis; L-histidine biosynthesis; L-histidine from 5-phospho-alpha-D-ribose 1-diphosphate: step 9/9. Catalyzes the sequential NAD-dependent oxidations of L-histidinol to L-histidinaldehyde and then to L-histidine. The chain is Putative histidinol dehydrogenase (hisD) from Azospirillum brasilense.